A 118-amino-acid chain; its full sequence is Large ribosomal subunit protein bL20 (118 aa).

This sequence belongs to the bacterial ribosomal protein bL20 family.

Functionally, binds directly to 23S ribosomal RNA and is necessary for the in vitro assembly process of the 50S ribosomal subunit. It is not involved in the protein synthesizing functions of that subunit. In Francisella tularensis subsp. tularensis (strain WY96-3418), this protein is Large ribosomal subunit protein bL20.